The sequence spans 277 residues: 2-dehydro-3-deoxyphosphooctonate aldolase (277 aa).

The protein belongs to the KdsA family.

It is found in the cytoplasm. It carries out the reaction D-arabinose 5-phosphate + phosphoenolpyruvate + H2O = 3-deoxy-alpha-D-manno-2-octulosonate-8-phosphate + phosphate. It functions in the pathway carbohydrate biosynthesis; 3-deoxy-D-manno-octulosonate biosynthesis; 3-deoxy-D-manno-octulosonate from D-ribulose 5-phosphate: step 2/3. The protein operates within bacterial outer membrane biogenesis; lipopolysaccharide biosynthesis. In Syntrophotalea carbinolica (strain DSM 2380 / NBRC 103641 / GraBd1) (Pelobacter carbinolicus), this protein is 2-dehydro-3-deoxyphosphooctonate aldolase.